The sequence spans 338 residues: Probable arabinan endo-1,5-alpha-L-arabinosidase A (338 aa).

Positions 1–20 (MRASFVVTAPLLAAAVHGYA) are cleaved as a signal peptide. D33 functions as the Proton acceptor in the catalytic mechanism. The active-site Proton donor is E217.

Belongs to the glycosyl hydrolase 43 family.

Its subcellular location is the secreted. The enzyme catalyses Endohydrolysis of (1-&gt;5)-alpha-arabinofuranosidic linkages in (1-&gt;5)-arabinans.. Its pathway is glycan metabolism; L-arabinan degradation. Endo-1,5-alpha-L-arabinanase involved in degradation of pectin. Its preferred substrate is linear 1,5-alpha-L-arabinan. The sequence is that of Probable arabinan endo-1,5-alpha-L-arabinosidase A (abnA) from Aspergillus terreus (strain NIH 2624 / FGSC A1156).